The sequence spans 621 residues: Complex I assembly factor ACAD9, mitochondrial (621 aa).

The N-terminal 37 residues, 1-37 (MSGCGLFLRTTAAARACRGLVVSTANRRLLRTSPPVR), are a transit peptide targeting the mitochondrion. At lysine 41 the chain carries N6-acetyllysine. Lysine 92 bears the N6-succinyllysine mark. The active-site Proton acceptor is the glutamate 426. A Phosphothreonine modification is found at threonine 478. N6-acetyllysine; alternate is present on lysine 521. At lysine 521 the chain carries N6-succinyllysine; alternate.

This sequence belongs to the acyl-CoA dehydrogenase family. Homodimer. Interacts with NDUFAF1 and ECSIT. Part of the mitochondrial complex I assembly/MCIA complex that comprises at least the core subunits TMEM126B, NDUFAF1, ECSIT and ACAD9 and complement subunits such as COA1 and TMEM186. Interacts with TMEM70 and TMEM242. Requires FAD as cofactor. In terms of tissue distribution, ubiquitously expressed in most normal human tissues and cancer cell lines with high level of expression in heart, skeletal muscles, brain, kidney and liver. In the cerebellum uniquely expressed in the granular layer (at protein level).

Its subcellular location is the mitochondrion inner membrane. The catalysed reaction is eicosanoyl-CoA + oxidized [electron-transfer flavoprotein] + H(+) = (2E)-eicosenoyl-CoA + reduced [electron-transfer flavoprotein]. It carries out the reaction octadecanoyl-CoA + oxidized [electron-transfer flavoprotein] + H(+) = (2E)-octadecenoyl-CoA + reduced [electron-transfer flavoprotein]. The enzyme catalyses oxidized [electron-transfer flavoprotein] + hexadecanoyl-CoA + H(+) = (2E)-hexadecenoyl-CoA + reduced [electron-transfer flavoprotein]. It catalyses the reaction decanoyl-CoA + oxidized [electron-transfer flavoprotein] + H(+) = (2E)-decenoyl-CoA + reduced [electron-transfer flavoprotein]. The catalysed reaction is nonanoyl-CoA + oxidized [electron-transfer flavoprotein] + H(+) = (2E)-nonenoyl-CoA + reduced [electron-transfer flavoprotein]. It carries out the reaction pentadecanoyl-CoA + oxidized [electron-transfer flavoprotein] + H(+) = (2E)-pentadecenoyl-CoA + reduced [electron-transfer flavoprotein]. The enzyme catalyses undecanoyl-CoA + oxidized [electron-transfer flavoprotein] + H(+) = trans-2-undecenoyl-CoA + reduced [electron-transfer flavoprotein]. It catalyses the reaction (9Z)-hexadecenoyl-CoA + oxidized [electron-transfer flavoprotein] + H(+) = (2E,9Z)-hexadecadienoyl-CoA + reduced [electron-transfer flavoprotein]. The catalysed reaction is heptadecanoyl-CoA + oxidized [electron-transfer flavoprotein] + H(+) = trans-2-heptadecenoyl-CoA + reduced [electron-transfer flavoprotein]. It carries out the reaction (9E)-octadecenoyl-CoA + oxidized [electron-transfer flavoprotein] + H(+) = (2E,9E)-octadecadienoyl-CoA + reduced [electron-transfer flavoprotein]. The enzyme catalyses oxidized [electron-transfer flavoprotein] + (9Z)-octadecenoyl-CoA + H(+) = (2E,9Z)-octadecadienoyl-CoA + reduced [electron-transfer flavoprotein]. It catalyses the reaction (9Z,12Z)-octadecadienoyl-CoA + oxidized [electron-transfer flavoprotein] + H(+) = (2E,9Z,12Z)-octadecatrienoyl-CoA + reduced [electron-transfer flavoprotein]. The catalysed reaction is (4Z,7Z,10Z,13Z,16Z,19Z)-docosahexaenoyl-CoA + oxidized [electron-transfer flavoprotein] + H(+) = (2E,4Z,7Z,10Z,13Z,16Z,19Z)-docosaheptaenoyl-CoA + reduced [electron-transfer flavoprotein]. It carries out the reaction tetradecanoyl-CoA + oxidized [electron-transfer flavoprotein] + H(+) = (2E)-tetradecenoyl-CoA + reduced [electron-transfer flavoprotein]. Functionally, as part of the MCIA complex, primarily participates in the assembly of the mitochondrial complex I and therefore plays a role in oxidative phosphorylation. This moonlighting protein also has a dehydrogenase activity toward a broad range of substrates with greater specificity for long-chain unsaturated acyl-CoAs. However, in vivo, it does not seem to play a primary role in fatty acid oxidation. In addition, the function in complex I assembly is independent of the dehydrogenase activity of the protein. The polypeptide is Complex I assembly factor ACAD9, mitochondrial (Homo sapiens (Human)).